Here is a 125-residue protein sequence, read N- to C-terminus: Large ribosomal subunit protein bL12 (125 aa).

The protein belongs to the bacterial ribosomal protein bL12 family. In terms of assembly, homodimer. Part of the ribosomal stalk of the 50S ribosomal subunit. Forms a multimeric L10(L12)X complex, where L10 forms an elongated spine to which 2 to 4 L12 dimers bind in a sequential fashion. Binds GTP-bound translation factors.

Forms part of the ribosomal stalk which helps the ribosome interact with GTP-bound translation factors. Is thus essential for accurate translation. This Methylorubrum extorquens (strain CM4 / NCIMB 13688) (Methylobacterium extorquens) protein is Large ribosomal subunit protein bL12.